A 245-amino-acid polypeptide reads, in one-letter code: Transcriptional regulatory protein VxrB (245 aa).

One can recognise a Response regulatory domain in the interval 31-142 (TLLLVEDDKN…ELFARIRAQL (112 aa)). Aspartate 78 carries the 4-aspartylphosphate modification. A DNA-binding region (ompR/PhoB-type) is located at residues 151 to 245 (DSKVVTSNLT…LRGVGYKMKA (95 aa)).

Post-translationally, phosphorylated by VxrA.

The protein localises to the cytoplasm. In terms of biological role, member of the two-component regulatory system VxrB/VxrA involved in the regulation of diverses processes, including virulence, the type VI secretion system (T6SS) and biofilm formation. VxrB positively regulates the expression of the T6SS, a virulence nanomachine that directly translocates effectors into bacterial or host cells, thereby facilitating colonization by competing with sister cells and intestinal microbiota. In addition, it activates vpsL expression and biofilm formation, and represses motility. May regulate biofilm formation via its regulation of key biofilm regulators and cyclic di-GMP levels. Significantly contributes to both attack and defense via T6SS, while also influencing competition via regulation of biofilm matrix production. Is critical for colonization in the infant mouse model. The sequence is that of Transcriptional regulatory protein VxrB from Vibrio cholerae serotype O1 (strain ATCC 39315 / El Tor Inaba N16961).